Reading from the N-terminus, the 516-residue chain is L-amino-acid oxidase (516 aa).

Residues 1-18 (MNVFFMFSLLFLAALGSC) form the signal peptide. Cysteines 28 and 189 form a disulfide. Residues 61-62 (MA), 81-82 (EA), R89, and 103-106 (GPMR) contribute to the FAD site. The substrate site is built by R106 and H239. V279 provides a ligand contact to FAD. The cysteines at positions 349 and 430 are disulfide-linked. N379 carries N-linked (GlcNAc...) asparagine glycosylation. Y390 contributes to the substrate binding site. FAD is bound by residues E475 and 482 to 487 (GWIDST). A substrate-binding site is contributed by 482–483 (GW).

Belongs to the flavin monoamine oxidase family. FIG1 subfamily. As to quaternary structure, homodimer; non-covalently linked. Requires FAD as cofactor. In terms of tissue distribution, expressed by the venom gland.

It is found in the secreted. It carries out the reaction an L-alpha-amino acid + O2 + H2O = a 2-oxocarboxylate + H2O2 + NH4(+). Functionally, catalyzes an oxidative deamination of predominantly hydrophobic and aromatic L-amino acids, thus producing hydrogen peroxide that may contribute to the diverse toxic effects of this enzyme. Exhibits diverse biological activities, such as hemolysis, edema, hemorrhage, apoptosis, antibacterial and antiparasitic activities, as well as regulation of platelet aggregation. Effects of snake L-amino oxidases on platelets are controversial, since they either induce aggregation or inhibit agonist-induced aggregation. These different effects are probably due to different experimental conditions. The protein is L-amino-acid oxidase of Crotalus adamanteus (Eastern diamondback rattlesnake).